Reading from the N-terminus, the 523-residue chain is Light-independent protochlorophyllide reductase subunit B (523 aa).

Aspartate 36 serves as a coordination point for [4Fe-4S] cluster. The active-site Proton donor is the aspartate 290. 425–426 is a substrate binding site; sequence GL.

The protein belongs to the ChlB/BchB/BchZ family. In terms of assembly, protochlorophyllide reductase is composed of three subunits; ChlL, ChlN and ChlB. Forms a heterotetramer of two ChlB and two ChlN subunits. Requires [4Fe-4S] cluster as cofactor.

The catalysed reaction is chlorophyllide a + oxidized 2[4Fe-4S]-[ferredoxin] + 2 ADP + 2 phosphate = protochlorophyllide a + reduced 2[4Fe-4S]-[ferredoxin] + 2 ATP + 2 H2O. It functions in the pathway porphyrin-containing compound metabolism; chlorophyll biosynthesis (light-independent). In terms of biological role, component of the dark-operative protochlorophyllide reductase (DPOR) that uses Mg-ATP and reduced ferredoxin to reduce ring D of protochlorophyllide (Pchlide) to form chlorophyllide a (Chlide). This reaction is light-independent. The NB-protein (ChlN-ChlB) is the catalytic component of the complex. This Prochlorococcus marinus (strain MIT 9301) protein is Light-independent protochlorophyllide reductase subunit B.